Here is a 371-residue protein sequence, read N- to C-terminus: Cathepsin L1 (371 aa).

A signal peptide spans 1 to 48 (MNHLGVFETRFRPRTRHKSQRAQLIPEQITMRTAVLLPLLALLAVAQA). The propeptide at 49–153 (VSFADVVMEE…VTFISPAHVT (105 aa)) is activation peptide. Asn-127 is a glycosylation site (N-linked (GlcNAc...) asparagine). 3 disulfide bridges follow: Cys-175–Cys-218, Cys-209–Cys-251, and Cys-310–Cys-360. The active site involves Cys-178. The active site involves His-317. Positions 327-329 (DES) are excised as a propeptide. The active site involves Asn-338.

The protein belongs to the peptidase C1 family. As to quaternary structure, dimer of a heavy and a light chain linked by disulfide bonds. As to expression, in the embryo, predominantly expressed in the midgut. Also expressed in larval alimentary organs such as salivary gland and midgut including gastric caeca.

It localises to the lysosome. The enzyme catalyses Specificity close to that of papain. As compared to cathepsin B, cathepsin L exhibits higher activity toward protein substrates, but has little activity on Z-Arg-Arg-NHMec, and no peptidyl-dipeptidase activity.. Important for the overall degradation of proteins in lysosomes. Essential for adult male and female fertility. May play a role in digestion. This Drosophila melanogaster (Fruit fly) protein is Cathepsin L1.